Reading from the N-terminus, the 142-residue chain is Large ribosomal subunit protein uL11 (142 aa).

Belongs to the universal ribosomal protein uL11 family. Part of the ribosomal stalk of the 50S ribosomal subunit. Interacts with L10 and the large rRNA to form the base of the stalk. L10 forms an elongated spine to which L12 dimers bind in a sequential fashion forming a multimeric L10(L12)X complex. One or more lysine residues are methylated.

Functionally, forms part of the ribosomal stalk which helps the ribosome interact with GTP-bound translation factors. The polypeptide is Large ribosomal subunit protein uL11 (Leptospira interrogans serogroup Icterohaemorrhagiae serovar copenhageni (strain Fiocruz L1-130)).